We begin with the raw amino-acid sequence, 67 residues long: Large ribosomal subunit protein bL35 (67 aa).

This sequence belongs to the bacterial ribosomal protein bL35 family.

This is Large ribosomal subunit protein bL35 from Anaeromyxobacter sp. (strain Fw109-5).